We begin with the raw amino-acid sequence, 354 residues long: FAD synthetase 1, chloroplastic (354 aa).

The transit peptide at M1 to S75 directs the protein to the chloroplast. Positions S228–R248 are disordered.

The cofactor is Mg(2+).

It localises to the plastid. It is found in the chloroplast. The enzyme catalyses FMN + ATP + H(+) = FAD + diphosphate. The protein operates within cofactor biosynthesis; FAD biosynthesis; FAD from FMN: step 1/1. Catalyzes the adenylation of flavin mononucleotide (FMN) to form flavin adenine dinucleotide (FAD) coenzyme. The protein is FAD synthetase 1, chloroplastic of Arabidopsis thaliana (Mouse-ear cress).